Reading from the N-terminus, the 192-residue chain is Holliday junction branch migration complex subunit RuvA (192 aa).

Residues 1–64 (MIGRLTGILA…EDGHYLYGFL (64 aa)) form a domain I region. A domain II region spans residues 65–143 (TEAERFAFRQ…DATGVSLHPA (79 aa)). Positions 144-149 (VDDSKQ) are flexible linker. The domain III stretch occupies residues 149–192 (QDISNALLALGYNEKEAASAMKQLPADVSTSDGIRAALKLLSKV).

The protein belongs to the RuvA family. As to quaternary structure, homotetramer. Forms an RuvA(8)-RuvB(12)-Holliday junction (HJ) complex. HJ DNA is sandwiched between 2 RuvA tetramers; dsDNA enters through RuvA and exits via RuvB. An RuvB hexamer assembles on each DNA strand where it exits the tetramer. Each RuvB hexamer is contacted by two RuvA subunits (via domain III) on 2 adjacent RuvB subunits; this complex drives branch migration. In the full resolvosome a probable DNA-RuvA(4)-RuvB(12)-RuvC(2) complex forms which resolves the HJ.

It localises to the cytoplasm. In terms of biological role, the RuvA-RuvB-RuvC complex processes Holliday junction (HJ) DNA during genetic recombination and DNA repair, while the RuvA-RuvB complex plays an important role in the rescue of blocked DNA replication forks via replication fork reversal (RFR). RuvA specifically binds to HJ cruciform DNA, conferring on it an open structure. The RuvB hexamer acts as an ATP-dependent pump, pulling dsDNA into and through the RuvAB complex. HJ branch migration allows RuvC to scan DNA until it finds its consensus sequence, where it cleaves and resolves the cruciform DNA. In Dechloromonas aromatica (strain RCB), this protein is Holliday junction branch migration complex subunit RuvA.